A 151-amino-acid polypeptide reads, in one-letter code: Large ribosomal subunit protein uL13 (151 aa).

The tract at residues 129-151 is disordered; the sequence is SNHPHQAQKPETLTINTIPGGNN.

The protein belongs to the universal ribosomal protein uL13 family. As to quaternary structure, part of the 50S ribosomal subunit.

Its function is as follows. This protein is one of the early assembly proteins of the 50S ribosomal subunit, although it is not seen to bind rRNA by itself. It is important during the early stages of 50S assembly. The protein is Large ribosomal subunit protein uL13 of Gloeothece citriformis (strain PCC 7424) (Cyanothece sp. (strain PCC 7424)).